Here is a 1135-residue protein sequence, read N- to C-terminus: DNA-directed RNA polymerase I subunit RPA2 (1135 aa).

Positions 1 to 26 (MDVDGRWRNLPSGPSLKHLTDPSYGI) are disordered. Arginine 180 contacts RNA. A loop B region spans residues 194–208 (VRPKWKSRGLGYTQF). The interval 236 to 247 (LNFIYRKELFFL) is loop A. Aspartate 367 provides a ligand contact to RNA. 2 fork loop regions span residues 439–453 (LRSK…DSGL) and 474–489 (RGAA…VRRL). A Mg(2+)-binding site is contributed by aspartate 755. Lysine 890 contacts RNA. DNA-binding residues include lysine 1020 and arginine 1036. Serine 1051 carries the phosphoserine modification. The Zn(2+) site is built by cysteine 1070, cysteine 1073, cysteine 1098, and cysteine 1101. Residues 1070–1101 (CVECGSLLSPLLEKPPPSWSAMRNRKYNCTVC) form a C4-type zinc finger.

This sequence belongs to the RNA polymerase beta chain family. As to quaternary structure, component of the RNA polymerase I (Pol I) complex consisting of 13 subunits: a ten-subunit catalytic core composed of POLR1A/RPA1, POLR1B/RPA2, POLR1C/RPAC1, POLR1D/RPAC2, POLR1H/RPA12, POLR2E/RPABC1, POLR2F/RPABC2, POLR2H/RPABC3, POLR2K/RPABC4 and POLR2L/RPABC5; a mobile stalk subunit POLR1F/RPA43 protruding from the core and additional subunits homologous to general transcription factors POLR1E/RPA49 and POLR1G/RPA34. Part of Pol I pre-initiation complex (PIC), in which Pol I core assembles with RRN3 and promoter-bound UTBF and SL1/TIF-IB complex. Requires Mg(2+) as cofactor.

Its subcellular location is the nucleus. It is found in the nucleolus. The protein resides in the chromosome. The catalysed reaction is RNA(n) + a ribonucleoside 5'-triphosphate = RNA(n+1) + diphosphate. Catalytic core component of RNA polymerase I (Pol I), a DNA-dependent RNA polymerase which synthesizes ribosomal RNA precursors using the four ribonucleoside triphosphates as substrates. Transcribes 47S pre-rRNAs from multicopy rRNA gene clusters, giving rise to 5.8S, 18S and 28S ribosomal RNAs. Pol I-mediated transcription cycle proceeds through transcription initiation, transcription elongation and transcription termination stages. During transcription initiation, Pol I pre-initiation complex (PIC) is recruited by the selectivity factor 1 (SL1/TIF-IB) complex bound to the core promoter that precedes an rDNA repeat unit. The PIC assembly bends the promoter favoring the formation of the transcription bubble and promoter escape. Once the polymerase has escaped from the promoter it enters the elongation phase during which RNA is actively polymerized, based on complementarity with the template DNA strand. Highly processive, assembles in structures referred to as 'Miller trees' where many elongating Pol I complexes queue and transcribe the same rDNA coding regions. At terminator sequences downstream of the rDNA gene, PTRF interacts with Pol I and halts Pol I transcription leading to the release of the RNA transcript and polymerase from the DNA. Forms Pol I active center together with the largest subunit POLR1A/RPA1. Appends one nucleotide at a time to the 3' end of the nascent RNA, with POLR1A/RPA1 contributing a Mg(2+)-coordinating DxDGD motif, and POLR1B/RPA2 participating in the coordination of a second Mg(2+) ion and providing lysine residues believed to facilitate Watson-Crick base pairing between the incoming nucleotide and the template base. Typically, Mg(2+) ions direct a 5' nucleoside triphosphate to form a phosphodiester bond with the 3' hydroxyl of the preceding nucleotide of the nascent RNA, with the elimination of pyrophosphate. Has proofreading activity: Pauses and backtracks to allow the cleavage of a missincorporated nucleotide via POLR1H/RPA12. High Pol I processivity is associated with decreased transcription fidelity. The protein is DNA-directed RNA polymerase I subunit RPA2 of Mus musculus (Mouse).